A 108-amino-acid chain; its full sequence is uncharacterized protein (108 aa).

The tract at residues E56 to H108 is disordered. A compositionally biased stretch (polar residues) spans G73–Q89.

This is an uncharacterized protein from Homo sapiens (Human).